The sequence spans 63 residues: Large ribosomal subunit protein bL35 (63 aa).

This sequence belongs to the bacterial ribosomal protein bL35 family.

The polypeptide is Large ribosomal subunit protein bL35 (Campylobacter jejuni (strain RM1221)).